Consider the following 106-residue polypeptide: Small ribosomal subunit protein bS16 (106 aa).

Belongs to the bacterial ribosomal protein bS16 family.

The protein is Small ribosomal subunit protein bS16 of Protochlamydia amoebophila (strain UWE25).